We begin with the raw amino-acid sequence, 1055 residues long: MDS1 and EVI1 complex locus protein EVI1-A (1055 aa).

3 consecutive C2H2-type zinc fingers follow at residues 21 to 48 (YRCE…VTPH), 75 to 97 (HECK…LLSH), and 103 to 125 (YKCD…QMSH). Residues 131–155 (YECENCSKQVFTDPSNLQRHIRSQH) form a C2H2-type 4; degenerate zinc finger. 2 consecutive C2H2-type zinc fingers follow at residues 161 to 183 (HACS…KHIH) and 189 to 211 (FVCE…KRMH). A C2H2-type 7; atypical zinc finger spans residues 218–240 (IKCKDCGQMFSTTSSLNKHRRFC). Disordered regions lie at residues 324–345 (PVKG…VNQP), 372–423 (FITE…SDKD), and 531–621 (VPLK…PELP). A compositionally biased stretch (polar residues) spans 332–345 (EQSSKSQSPHVNQP). Positions 381–392 (RPHEKISDHSES) are enriched in basic and acidic residues. The segment covering 399–413 (STPSGSDLETTSGSD) has biased composition (polar residues). Residues 422–435 (KDKLKENGKLYKDK) carry the Nuclear localization signal motif. The span at 531-566 (VPLKIEPESPKETKKVQKGKTESPFDLTTKRKEEKA) shows a compositional bias: basic and acidic residues. The CTBP-binding motif 1 motif lies at 554–558 (PFDLT). Positions 569–583 (NVPSKSGAPTSSNHD) are enriched in polar residues. The CTBP-binding motif 2 motif lies at 585–589 (PLDLS). Positions 591 to 601 (GSRSRAATTKQ) are enriched in polar residues. Positions 602 to 621 (TEPRKNHIFNEKKDMDPELP) are enriched in basic and acidic residues. 3 consecutive C2H2-type zinc fingers follow at residues 734-756 (YTCR…LRTH), 762-785 (YRCK…RNIH), and 791-813 (FKCH…LKKH). Disordered stretches follow at residues 813-837 (HENG…GPIL) and 922-957 (SVDE…EDFK). Residues 816–827 (GNLSGTAASSPH) are compositionally biased toward polar residues. Residues 944-954 (DDEDDDDDEEE) are compositionally biased toward acidic residues.

In terms of assembly, homooligomer. Interacts with ctbp. In terms of tissue distribution, expressed dynamically during embryonic development; in the developing pronephros, specific areas of the brain (forebrain, midbrain and hindbrain), and in the majority of the visceral arch, and head mesenchyme derived from neural crest cells. Within the pronephros, expressed in the ventroposterior region of the pronephros anlagen from stage 20 (and is absent from the splanchnic layer that forms the glomus), then expression becomes restricted to the distal tubule and duct by the tadpole stage. In adults, expressed in various tissues including kidney, lung, testis, spleen and stomach.

The protein resides in the nucleus. Its subcellular location is the nucleus speckle. Its function is as follows. Transcriptional repressor during pronephros development. Plays a role in regionalization of the pronephros; may promote formation of the distal tubule and duct over formation of the glomus and proximal tubule. The polypeptide is MDS1 and EVI1 complex locus protein EVI1-A (mecom-a) (Xenopus laevis (African clawed frog)).